We begin with the raw amino-acid sequence, 171 residues long: Stage III sporulation protein AB (171 aa).

The chain is Stage III sporulation protein AB (spoIIIAB) from Bacillus subtilis (strain 168).